A 251-amino-acid polypeptide reads, in one-letter code: Haloacid dehalogenase-like hydrolase domain-containing protein 3 (251 aa).

Lys15 bears the N6-acetyllysine; alternate mark. The residue at position 15 (Lys15) is an N6-succinyllysine; alternate.

It belongs to the HAD-like hydrolase superfamily.

The sequence is that of Haloacid dehalogenase-like hydrolase domain-containing protein 3 (HDHD3) from Homo sapiens (Human).